The primary structure comprises 122 residues: Large ribosomal subunit protein bL12 (122 aa).

The protein belongs to the bacterial ribosomal protein bL12 family. As to quaternary structure, homodimer. Part of the ribosomal stalk of the 50S ribosomal subunit. Forms a multimeric L10(L12)X complex, where L10 forms an elongated spine to which 2 to 4 L12 dimers bind in a sequential fashion. Binds GTP-bound translation factors.

Forms part of the ribosomal stalk which helps the ribosome interact with GTP-bound translation factors. Is thus essential for accurate translation. This Staphylococcus epidermidis (strain ATCC 35984 / DSM 28319 / BCRC 17069 / CCUG 31568 / BM 3577 / RP62A) protein is Large ribosomal subunit protein bL12.